The sequence spans 1370 residues: DNA-directed RNA polymerase subunit beta (1370 aa).

It belongs to the RNA polymerase beta chain family. In terms of assembly, the RNAP catalytic core consists of 2 alpha, 1 beta, 1 beta' and 1 omega subunit. When a sigma factor is associated with the core the holoenzyme is formed, which can initiate transcription.

The catalysed reaction is RNA(n) + a ribonucleoside 5'-triphosphate = RNA(n+1) + diphosphate. In terms of biological role, DNA-dependent RNA polymerase catalyzes the transcription of DNA into RNA using the four ribonucleoside triphosphates as substrates. This chain is DNA-directed RNA polymerase subunit beta, found in Syntrophobacter fumaroxidans (strain DSM 10017 / MPOB).